The primary structure comprises 312 residues: Malate dehydrogenase (312 aa).

NAD(+)-binding positions include 7 to 13 (GAAGGIG) and Asp-34. The substrate site is built by Arg-81 and Arg-87. NAD(+) is bound by residues Asn-94 and 117 to 119 (ITN). Positions 119 and 153 each coordinate substrate. The active-site Proton acceptor is the His-177. Met-227 is an NAD(+) binding site.

The protein belongs to the LDH/MDH superfamily. MDH type 1 family. Homodimer.

The enzyme catalyses (S)-malate + NAD(+) = oxaloacetate + NADH + H(+). Functionally, catalyzes the reversible oxidation of malate to oxaloacetate. The polypeptide is Malate dehydrogenase (Moritella marina (Vibrio marinus)).